We begin with the raw amino-acid sequence, 196 residues long: Phosphoheptose isomerase (196 aa).

The 160-residue stretch at 36–195 (VIQAYKLGKK…EKELFGEKVD (160 aa)) folds into the SIS domain. 51-53 (NGG) is a substrate binding site. His-60 and Glu-64 together coordinate Zn(2+). Residues Glu-64, 93–94 (ND), 119–121 (STS), Ser-124, and Gln-171 each bind substrate. Residues Gln-171 and His-179 each coordinate Zn(2+).

The protein belongs to the SIS family. GmhA subfamily. Zn(2+) is required as a cofactor.

It is found in the cytoplasm. The catalysed reaction is 2 D-sedoheptulose 7-phosphate = D-glycero-alpha-D-manno-heptose 7-phosphate + D-glycero-beta-D-manno-heptose 7-phosphate. It participates in carbohydrate biosynthesis; D-glycero-D-manno-heptose 7-phosphate biosynthesis; D-glycero-alpha-D-manno-heptose 7-phosphate and D-glycero-beta-D-manno-heptose 7-phosphate from sedoheptulose 7-phosphate: step 1/1. In terms of biological role, catalyzes the isomerization of sedoheptulose 7-phosphate in D-glycero-D-manno-heptose 7-phosphate. This chain is Phosphoheptose isomerase, found in Clostridium acetobutylicum (strain ATCC 824 / DSM 792 / JCM 1419 / IAM 19013 / LMG 5710 / NBRC 13948 / NRRL B-527 / VKM B-1787 / 2291 / W).